Consider the following 163-residue polypeptide: Nucleotide-binding protein NT01EI_1072 (163 aa).

It belongs to the YajQ family.

Nucleotide-binding protein. This Edwardsiella ictaluri (strain 93-146) protein is Nucleotide-binding protein NT01EI_1072.